The sequence spans 675 residues: Zinc finger CCCH domain-containing protein 65 (675 aa).

The disordered stretch occupies residues 294 to 320 (TFSNEAKMDPGTSIKKRSAPSKDAKAR). Residues 307–320 (IKKRSAPSKDAKAR) are compositionally biased toward basic residues. Residues 314-342 (SKDAKARKRAKARIKRAQERIALGVKKLK) adopt a coiled-coil conformation. C3H1-type zinc fingers lie at residues 350 to 377 (PKPI…HDTI), 384 to 406 (PCCY…HDLS), and 409 to 432 (PCNN…HKGT). Disordered stretches follow at residues 487–572 (LKPS…LPLG) and 586–612 (EQKT…SHIQ). Residues 490–504 (SSHSNQRNSSDASSS) are compositionally biased toward low complexity. Positions 543-567 (KASSASKPNTDNSDSQTLKQSQQGS) are enriched in polar residues. A compositionally biased stretch (basic and acidic residues) spans 586 to 595 (EQKTLNREPQ). Over residues 597–612 (PASSKNLKTTPSSHIQ) the composition is skewed to polar residues.

Its function is as follows. Possesses RNA-binding and ribonuclease activities in vitro. The protein is Zinc finger CCCH domain-containing protein 65 (EMB1789) of Arabidopsis thaliana (Mouse-ear cress).